The chain runs to 122 residues: MPRIIGIDIPAKKKLKISLTYIYGIGPALSEEIIARLQLNPEARAAELTEEEVGRLNALLQSDYVVEGDLRRRVQSDIKRLITIHAYRGQRHRLSLPVRGQRTKTNSRTRKGKRKTVAGKKK.

The disordered stretch occupies residues 94-122 (LSLPVRGQRTKTNSRTRKGKRKTVAGKKK). The span at 101-122 (QRTKTNSRTRKGKRKTVAGKKK) shows a compositional bias: basic residues.

The protein belongs to the universal ribosomal protein uS13 family. As to quaternary structure, part of the 30S ribosomal subunit. Forms a loose heterodimer with protein S19. Forms two bridges to the 50S subunit in the 70S ribosome.

Located at the top of the head of the 30S subunit, it contacts several helices of the 16S rRNA. In the 70S ribosome it contacts the 23S rRNA (bridge B1a) and protein L5 of the 50S subunit (bridge B1b), connecting the 2 subunits; these bridges are implicated in subunit movement. Contacts the tRNAs in the A and P-sites. This Chlamydia muridarum (strain MoPn / Nigg) protein is Small ribosomal subunit protein uS13.